We begin with the raw amino-acid sequence, 365 residues long: MFEINPVKNRIQDLSDRTAVLRGYLDYDAKKERLEEVNAELEQPDVWNEPERAQALGKERSSLEEIVTTIDQLDQGMDDVTGLLELAIEADDEETFNEAVAELDILDGKLGQLEFRRMFSGEYDSANCYLDLQAGSGGTEAQDWASMLLRMYLRWAEAKGFKTEIIEESDGDVAGLKSATIKIIGDYAFGWLRTETGVHRLVRKSPFDSGGRRHTSFSSAFVYPEVDDDIDIEINPADLRIDVYRASGAGGQHVNKTESAVRITHIPTNIVTQCQNDRSQHKNKDQAMKQLKAKLYEFEMQKKNADKQMLEDNKSDIGWGSQIRSYVLDDSRIKDLRTGVETRNTQAVLDGDLDKFIEASLKAGL.

Residue Gln-252 is modified to N5-methylglutamine.

This sequence belongs to the prokaryotic/mitochondrial release factor family. Post-translationally, methylated by PrmC. Methylation increases the termination efficiency of RF2.

It is found in the cytoplasm. Its function is as follows. Peptide chain release factor 2 directs the termination of translation in response to the peptide chain termination codons UGA and UAA. This is Peptide chain release factor 2 from Yersinia enterocolitica serotype O:8 / biotype 1B (strain NCTC 13174 / 8081).